A 418-amino-acid chain; its full sequence is tRNA-2-methylthio-N(6)-dimethylallyladenosine synthase (418 aa).

Positions 1–118 constitute an MTTase N-terminal domain; sequence MNYLIETIGC…ALKIMNLFRT (118 aa). Residues cysteine 10, cysteine 46, cysteine 80, cysteine 143, cysteine 147, and cysteine 150 each coordinate [4Fe-4S] cluster. The 228-residue stretch at 129 to 356 folds into the Radical SAM core domain; sequence IKSKIVRYIT…LKESNKISIE (228 aa). One can recognise a TRAM domain in the interval 359–418; it reads SEMLGSTQQVLAEEIKNGIIKARTKNGRKVFAEGRKEYIGKHINVNIKEAKINSLFGDIV.

This sequence belongs to the methylthiotransferase family. MiaB subfamily. Monomer. The cofactor is [4Fe-4S] cluster.

The protein resides in the cytoplasm. The enzyme catalyses N(6)-dimethylallyladenosine(37) in tRNA + (sulfur carrier)-SH + AH2 + 2 S-adenosyl-L-methionine = 2-methylsulfanyl-N(6)-dimethylallyladenosine(37) in tRNA + (sulfur carrier)-H + 5'-deoxyadenosine + L-methionine + A + S-adenosyl-L-homocysteine + 2 H(+). Functionally, catalyzes the methylthiolation of N6-(dimethylallyl)adenosine (i(6)A), leading to the formation of 2-methylthio-N6-(dimethylallyl)adenosine (ms(2)i(6)A) at position 37 in tRNAs that read codons beginning with uridine. This Endomicrobium trichonymphae protein is tRNA-2-methylthio-N(6)-dimethylallyladenosine synthase.